Reading from the N-terminus, the 578-residue chain is NADPH oxidase 4 (578 aa).

Residues 1–16 lie on the Cytoplasmic side of the membrane; the sequence is MAVSWRSWLANEGVKH. A helical membrane pass occupies residues 17-37; the sequence is LCLLIWLSLNVLLFWKTFLLY. Topologically, residues 38 to 62 are extracellular; sequence NQGPEYYYIHQMLGLGLCLSRASAS. The Ferric oxidoreductase domain occupies 58-303; it reads RASASVLNLN…YCAERLYRCI (246 aa). Residues 63–83 traverse the membrane as a helical segment; that stretch reads VLNLNCSLILLPMCRTVLAYL. The Cytoplasmic segment spans residues 84–104; that stretch reads RGSQKVPSRRTRRLLDKSKTL. A helical transmembrane segment spans residues 105 to 125; sequence HITCGVTICIFSGVHVAAHLV. Over 126 to 154 the chain is Extracellular; sequence NALNFSVNYSEDFLELNAARYQNEDPRKL. N-linked (GlcNAc...) asparagine glycosylation occurs at N133. Residues 155-175 traverse the membrane as a helical segment; it reads LFTTIPGLTGVCMVVVLFLMV. At 176-188 the chain is on the cytoplasmic side; it reads TASTYAIRVSNYD. The chain crosses the membrane as a helical span at residues 189–209; that stretch reads IFWYTHNLFFVFYMLLLLHVS. Over 210–424 the chain is Extracellular; it reads GGLLKYQTNV…SPFEESLNYE (215 aa). Positions 218–273 are E-loop; essential for H2O2 generating catalytic activity; sequence NVDTHPPGCISLNQTSSQNMSIPDYVSEHFHGSLPRGFSKLEDRYQKTLVKICLEE. The N-linked (GlcNAc...) asparagine glycan is linked to N230. Residues 248-575 form a mediates interaction with TLR4 region; that stretch reads HGSLPRGFSK…YGTKFEYNKE (328 aa). Residues 304–419 form the FAD-binding FR-type domain; the sequence is RSNKPVTIIS…DGPFGSPFEE (116 aa). Residues 425–445 form a helical membrane-spanning segment; that stretch reads VSLCVAGGIGVTPFASILNTL. The Cytoplasmic segment spans residues 446–578; that stretch reads LDDWKPYKLR…KFEYNKESFS (133 aa).

As to quaternary structure, interacts with, relocalizes and stabilizes CYBA/p22phox. Interacts with TLR4. Interacts with protein disulfide isomerase. Interacts with PPP1R15A. Interacts with LRRC8A; this interaction prevents the ubiquitin-mediated degradation of LRRC8A. Heme is required as a cofactor. Post-translationally, N-glycosylation is required for the function. As to expression, EXpressed in brain, in all layers of the cerebellum, in pyramidal cells of the Ammon horn and in Purkinje cells (at protein level). Expressed in osteoclasts, leukocytes, kidney, liver and lung.

The protein resides in the cytoplasm. Its subcellular location is the endoplasmic reticulum membrane. It localises to the cell membrane. The protein localises to the cell junction. It is found in the focal adhesion. The protein resides in the nucleus. The enzyme catalyses NADPH + 2 O2 = 2 superoxide + NADP(+) + H(+). It catalyses the reaction NADPH + O2 + H(+) = H2O2 + NADP(+). Its activity is regulated as follows. Activated by insulin. Inhibited by diphenylene iodonium. Inhibited by plumbagin. Activated by phorbol 12-myristate 13-acetate (PMA). Functionally, NADPH oxidase that catalyzes predominantly the reduction of oxygen to H2O2. Can also catalyze to a smaller extent, the reduction of oxygen to superoxide. May function as an oxygen sensor regulating the KCNK3/TASK-1 potassium channel and HIF1A activity. May regulate insulin signaling cascade. May play a role in apoptosis, bone resorption and lipolysaccharide-mediated activation of NFKB. May produce superoxide in the nucleus and play a role in regulating gene expression upon cell stimulation. Promotes ferroptosis, reactive oxygen species production and reduced glutathione (GSH) levels by activating NLRP3 inflammasome activation and cytokine release. In Mus musculus (Mouse), this protein is NADPH oxidase 4 (Nox4).